Reading from the N-terminus, the 337-residue chain is Succinylglutamate desuccinylase (337 aa).

Residues H59, E62, and H152 each contribute to the Zn(2+) site. The active site involves E216.

Belongs to the AspA/AstE family. Succinylglutamate desuccinylase subfamily. The cofactor is Zn(2+).

It carries out the reaction N-succinyl-L-glutamate + H2O = L-glutamate + succinate. It functions in the pathway amino-acid degradation; L-arginine degradation via AST pathway; L-glutamate and succinate from L-arginine: step 5/5. In terms of biological role, transforms N(2)-succinylglutamate into succinate and glutamate. The chain is Succinylglutamate desuccinylase from Ectopseudomonas mendocina (strain ymp) (Pseudomonas mendocina).